The chain runs to 283 residues: Protein/nucleic acid deglycase HchA (283 aa).

Residues H86, E91, and H123 each coordinate Zn(2+). The active-site Nucleophile is C185.

Belongs to the peptidase C56 family. HchA subfamily. As to quaternary structure, homodimer.

It localises to the cytoplasm. The catalysed reaction is N(omega)-(1-hydroxy-2-oxopropyl)-L-arginyl-[protein] + H2O = lactate + L-arginyl-[protein] + H(+). It catalyses the reaction N(6)-(1-hydroxy-2-oxopropyl)-L-lysyl-[protein] + H2O = lactate + L-lysyl-[protein] + H(+). The enzyme catalyses S-(1-hydroxy-2-oxopropyl)-L-cysteinyl-[protein] + H2O = lactate + L-cysteinyl-[protein] + H(+). It carries out the reaction N(omega)-(1-hydroxy-2-oxoethyl)-L-arginyl-[protein] + H2O = L-arginyl-[protein] + glycolate + H(+). The catalysed reaction is N(6)-(1-hydroxy-2-oxoethyl)-L-lysyl-[protein] + H2O = glycolate + L-lysyl-[protein] + H(+). It catalyses the reaction S-(1-hydroxy-2-oxoethyl)-L-cysteinyl-[protein] + H2O = glycolate + L-cysteinyl-[protein] + H(+). The enzyme catalyses N(2)-(1-hydroxy-2-oxopropyl)-dGTP + H2O = lactate + dGTP + H(+). It carries out the reaction N(2)-(1-hydroxy-2-oxopropyl)-GTP + H2O = lactate + GTP + H(+). The catalysed reaction is N(2)-(1-hydroxy-2-oxopropyl)-GDP + H2O = lactate + GDP + H(+). It catalyses the reaction N(2)-(1-hydroxy-2-oxopropyl)-GMP + H2O = lactate + GMP + H(+). The enzyme catalyses N(2)-(1-hydroxy-2-oxoethyl)-dGTP + H2O = dGTP + glycolate + H(+). It carries out the reaction N(2)-(1-hydroxy-2-oxoethyl)-GTP + H2O = glycolate + GTP + H(+). The catalysed reaction is N(2)-(1-hydroxy-2-oxoethyl)-GDP + H2O = glycolate + GDP + H(+). It catalyses the reaction N(2)-(1-hydroxy-2-oxoethyl)-GMP + H2O = glycolate + GMP + H(+). The enzyme catalyses an N(2)-(1-hydroxy-2-oxopropyl)-guanosine in RNA + H2O = a guanosine in RNA + lactate + H(+). It carries out the reaction an N(2)-(1-hydroxy-2-oxopropyl)-2'-deoxyguanosine in DNA + H2O = a 2'-deoxyguanosine in DNA + lactate + H(+). The catalysed reaction is an N(2)-(1-hydroxy-2-oxoethyl)-guanosine in RNA + H2O = a guanosine in RNA + glycolate + H(+). It catalyses the reaction an N(2)-(1-hydroxy-2-oxoethyl)-2'-deoxyguanosine in DNA + H2O = a 2'-deoxyguanosine in DNA + glycolate + H(+). Functionally, protein and nucleotide deglycase that catalyzes the deglycation of the Maillard adducts formed between amino groups of proteins or nucleotides and reactive carbonyl groups of glyoxals. Thus, functions as a protein deglycase that repairs methylglyoxal- and glyoxal-glycated proteins, and releases repaired proteins and lactate or glycolate, respectively. Deglycates cysteine, arginine and lysine residues in proteins, and thus reactivates these proteins by reversing glycation by glyoxals. Acts on early glycation intermediates (hemithioacetals and aminocarbinols), preventing the formation of Schiff bases and advanced glycation endproducts (AGE). Also functions as a nucleotide deglycase able to repair glycated guanine in the free nucleotide pool (GTP, GDP, GMP, dGTP) and in DNA and RNA. Is thus involved in a major nucleotide repair system named guanine glycation repair (GG repair), dedicated to reversing methylglyoxal and glyoxal damage via nucleotide sanitization and direct nucleic acid repair. Plays an important role in protecting cells from carbonyl stress. The sequence is that of Protein/nucleic acid deglycase HchA from Shigella sonnei (strain Ss046).